Consider the following 55-residue polypeptide: Large ribosomal subunit protein bL33 (55 aa).

The protein belongs to the bacterial ribosomal protein bL33 family.

This is Large ribosomal subunit protein bL33 from Aliivibrio fischeri (strain ATCC 700601 / ES114) (Vibrio fischeri).